We begin with the raw amino-acid sequence, 154 residues long: 6,7-dimethyl-8-ribityllumazine synthase (154 aa).

Residues Phe-26, 60-62 (ALE), and 84-86 (CII) each bind 5-amino-6-(D-ribitylamino)uracil. Residue 89 to 90 (ET) coordinates (2S)-2-hydroxy-3-oxobutyl phosphate. The Proton donor role is filled by His-92. Asn-117 contacts 5-amino-6-(D-ribitylamino)uracil. Arg-131 provides a ligand contact to (2S)-2-hydroxy-3-oxobutyl phosphate.

This sequence belongs to the DMRL synthase family.

It catalyses the reaction (2S)-2-hydroxy-3-oxobutyl phosphate + 5-amino-6-(D-ribitylamino)uracil = 6,7-dimethyl-8-(1-D-ribityl)lumazine + phosphate + 2 H2O + H(+). It participates in cofactor biosynthesis; riboflavin biosynthesis; riboflavin from 2-hydroxy-3-oxobutyl phosphate and 5-amino-6-(D-ribitylamino)uracil: step 1/2. Its function is as follows. Catalyzes the formation of 6,7-dimethyl-8-ribityllumazine by condensation of 5-amino-6-(D-ribitylamino)uracil with 3,4-dihydroxy-2-butanone 4-phosphate. This is the penultimate step in the biosynthesis of riboflavin. The chain is 6,7-dimethyl-8-ribityllumazine synthase from Polaromonas sp. (strain JS666 / ATCC BAA-500).